We begin with the raw amino-acid sequence, 136 residues long: Large ribosomal subunit protein uL16 (136 aa).

The protein belongs to the universal ribosomal protein uL16 family. In terms of assembly, part of the 50S ribosomal subunit.

Binds 23S rRNA and is also seen to make contacts with the A and possibly P site tRNAs. This Bradyrhizobium diazoefficiens (strain JCM 10833 / BCRC 13528 / IAM 13628 / NBRC 14792 / USDA 110) protein is Large ribosomal subunit protein uL16.